The following is a 277-amino-acid chain: Diaminopimelate epimerase (277 aa).

Substrate-binding residues include asparagine 13, glutamine 46, and asparagine 66. Cysteine 75 acts as the Proton donor in catalysis. Substrate-binding positions include 76-77 (GN), asparagine 160, asparagine 193, and 211-212 (ER). The active-site Proton acceptor is cysteine 220. 221–222 (GS) serves as a coordination point for substrate.

The protein belongs to the diaminopimelate epimerase family. Homodimer.

It is found in the cytoplasm. It catalyses the reaction (2S,6S)-2,6-diaminopimelate = meso-2,6-diaminopimelate. Its pathway is amino-acid biosynthesis; L-lysine biosynthesis via DAP pathway; DL-2,6-diaminopimelate from LL-2,6-diaminopimelate: step 1/1. Functionally, catalyzes the stereoinversion of LL-2,6-diaminopimelate (L,L-DAP) to meso-diaminopimelate (meso-DAP), a precursor of L-lysine and an essential component of the bacterial peptidoglycan. In Legionella pneumophila (strain Paris), this protein is Diaminopimelate epimerase.